The following is a 394-amino-acid chain: Probable fatty acyl-CoA transferase Rv3272 (394 aa).

The active-site Nucleophile is the D175.

It belongs to the CoA-transferase III family. In terms of assembly, homodimer.

Probably involved in fatty acid metabolism. Binds to fatty acyl-CoAs of varying carbon chain lengths, with the highest binding affinity for palmitoyl-CoA (C16:0). In vitro, alters the cell wall lipid profile and protects mycobacteria from acidic, oxidative and antibiotic stress. May play a significant role in host-pathogen interaction. The sequence is that of Probable fatty acyl-CoA transferase Rv3272 from Mycobacterium tuberculosis (strain ATCC 25618 / H37Rv).